The sequence spans 206 residues: 3-demethoxyubiquinol 3-hydroxylase (206 aa).

Positions 55, 85, 88, 137, 169, and 172 each coordinate Fe cation.

This sequence belongs to the COQ7 family. The cofactor is Fe cation.

The protein localises to the cell membrane. It carries out the reaction a 5-methoxy-2-methyl-3-(all-trans-polyprenyl)benzene-1,4-diol + AH2 + O2 = a 3-demethylubiquinol + A + H2O. It participates in cofactor biosynthesis; ubiquinone biosynthesis. Catalyzes the hydroxylation of 2-nonaprenyl-3-methyl-6-methoxy-1,4-benzoquinol during ubiquinone biosynthesis. The chain is 3-demethoxyubiquinol 3-hydroxylase from Chromobacterium violaceum (strain ATCC 12472 / DSM 30191 / JCM 1249 / CCUG 213 / NBRC 12614 / NCIMB 9131 / NCTC 9757 / MK).